Here is a 662-residue protein sequence, read N- to C-terminus: ATP-dependent zinc metalloprotease FtsH (662 aa).

Residues 1–15 (MSENPVKRPGKDGSR) show a composition bias toward basic and acidic residues. Positions 1-35 (MSENPVKRPGKDGSRNKFKPVQEEGGTPGWFRSKG) are disordered. Residues 1-39 (MSENPVKRPGKDGSRNKFKPVQEEGGTPGWFRSKGESPQ) are Cytoplasmic-facing. The helical transmembrane segment at 40-60 (GKFPGFLLFLMAGLLMLFVFL) threads the bilayer. At 61 to 154 (RFFSGTDAPE…LKVEKGSSDL (94 aa)) the chain is on the periplasmic side. The helical transmembrane segment at 155–175 (NTFLALFAPWIIFAALYFFLF) threads the bilayer. At 176–662 (RRMSGQNGAQ…QGALPNPVTA (487 aa)) the chain is on the cytoplasmic side. Position 250–257 (250–257 (GPPGTGKT)) interacts with ATP. Zn(2+) is bound at residue histidine 472. Residue glutamate 473 is part of the active site. Residues histidine 476 and aspartate 548 each coordinate Zn(2+).

The protein in the central section; belongs to the AAA ATPase family. It in the C-terminal section; belongs to the peptidase M41 family. Homohexamer. The cofactor is Zn(2+).

The protein resides in the cell inner membrane. In terms of biological role, acts as a processive, ATP-dependent zinc metallopeptidase for both cytoplasmic and membrane proteins. Plays a role in the quality control of integral membrane proteins. This Pelodictyon phaeoclathratiforme (strain DSM 5477 / BU-1) protein is ATP-dependent zinc metalloprotease FtsH.